The sequence spans 127 residues: Fluoride-specific ion channel FluC (127 aa).

4 consecutive transmembrane segments (helical) span residues 4 to 24 (LLLAVFIGGGTGSVARWLLSM), 35 to 55 (LGTLAANLIGAFIIGMGFAWF), 71 to 91 (TGFCGGLTTFSTFSAEVVFLL), and 103 to 123 (VFVNLLGSFAMTALAFWLFSA). The Na(+) site is built by G75 and T78.

It belongs to the fluoride channel Fluc/FEX (TC 1.A.43) family.

The protein resides in the cell inner membrane. It carries out the reaction fluoride(in) = fluoride(out). Its activity is regulated as follows. Na(+) is not transported, but it plays an essential structural role and its presence is essential for fluoride channel function. In terms of biological role, fluoride-specific ion channel. Important for reducing fluoride concentration in the cell, thus reducing its toxicity. This chain is Fluoride-specific ion channel FluC, found in Escherichia coli O17:K52:H18 (strain UMN026 / ExPEC).